A 338-amino-acid polypeptide reads, in one-letter code: Ornithine carbamoyltransferase, catabolic (338 aa).

Residues 58-61 (STRT), Gln-85, Arg-109, and 136-139 (HPTQ) each bind carbamoyl phosphate. L-ornithine is bound by residues Asn-168, Asp-232, and 236 to 237 (SM). Carbamoyl phosphate contacts are provided by residues 273–274 (CL) and Arg-318.

It belongs to the aspartate/ornithine carbamoyltransferase superfamily. OTCase family.

It localises to the cytoplasm. The enzyme catalyses carbamoyl phosphate + L-ornithine = L-citrulline + phosphate + H(+). The protein operates within amino-acid degradation; L-arginine degradation via ADI pathway; carbamoyl phosphate from L-arginine: step 2/2. In terms of biological role, reversibly catalyzes the transfer of the carbamoyl group from carbamoyl phosphate (CP) to the N(epsilon) atom of ornithine (ORN) to produce L-citrulline. The chain is Ornithine carbamoyltransferase, catabolic from Streptococcus gordonii (strain Challis / ATCC 35105 / BCRC 15272 / CH1 / DL1 / V288).